The primary structure comprises 445 residues: Argininosuccinate synthase (445 aa).

Residues 17–25 and A43 contribute to the ATP site; that span reads AFSGGLDTS. Y99 is a binding site for L-citrulline. G129 and T131 together coordinate ATP. Residues T131, N135, and D136 each contribute to the L-aspartate site. N135 serves as a coordination point for L-citrulline. D136 is a binding site for ATP. R139 and S192 together coordinate L-citrulline. ATP is bound at residue D194. L-citrulline is bound by residues T201, E203, and E280.

This sequence belongs to the argininosuccinate synthase family. Type 2 subfamily. In terms of assembly, homotetramer.

The protein resides in the cytoplasm. The enzyme catalyses L-citrulline + L-aspartate + ATP = 2-(N(omega)-L-arginino)succinate + AMP + diphosphate + H(+). Its pathway is amino-acid biosynthesis; L-arginine biosynthesis; L-arginine from L-ornithine and carbamoyl phosphate: step 2/3. The protein is Argininosuccinate synthase of Rhodopseudomonas palustris (strain BisA53).